The sequence spans 359 residues: E2F transcription factor-like E2FD (359 aa).

2 DNA-binding regions span residues 13–78 (RKDK…SWKG) and 138–217 (RKER…RWLG). Disordered stretches follow at residues 255–274 (RNKSGCSKEDSKRNGNQNTS) and 288–313 (DVKNFASGSSTPAGTSESNDMGNNIR). Residues 293 to 309 (ASGSSTPAGTSESNDMG) are compositionally biased toward polar residues.

Belongs to the E2F/DP family. Monomer. No interactions with DPA or E2FA. In terms of tissue distribution, preferentially expressed in proliferating tissues. Highly expressed in young stalk and young flowers. Lower expression in young leaves and mature flowers. Detected in cotyledonary vascular tissues, the shoot apical meristem, the base of trichomes, the fully developed stomata, the central root cylinder and in the columella of lateral roots but not in the primary root tips or in the leaf epidermal cells.

The protein localises to the nucleus. Its function is as follows. Inhibitor of E2F-dependent regulation of gene expression. Binds specifically the E2 recognition site as a monomer without interacting with DP proteins. May be up-regulating E2FA and down-regulating repressors of cell cycle progression. Promotes cell proliferation and represses cell elongation. Regulated by proteolysis via a ubiquitin-proteasome pathway. In Arabidopsis thaliana (Mouse-ear cress), this protein is E2F transcription factor-like E2FD (E2FD).